A 353-amino-acid polypeptide reads, in one-letter code: Photosystem II D2 protein (353 aa).

At T2 the chain carries N-acetylthreonine. Position 2 is a phosphothreonine (T2). The chain crosses the membrane as a helical span at residues 41–61; the sequence is CAYFALGGWLTGTTFVTSWYT. Residue H118 participates in chlorophyll a binding. A helical transmembrane segment spans residues 125–141; that stretch reads GFMLRQFEIARSVGLRP. Pheophytin a is bound by residues Q130 and N143. Residues 153–166 form a helical membrane-spanning segment; it reads VFVSVFLIYPLGQS. H198 is a binding site for chlorophyll a. Residues 208-228 form a helical membrane-spanning segment; it reads AALLCAIHGATVENTIFEDGD. A plastoquinone is bound by residues H215 and F262. H215 serves as a coordination point for Fe cation. Fe cation is bound at residue H269. A helical transmembrane segment spans residues 279–295; the sequence is GLWMSAIGVVGLALNLR.

The protein belongs to the reaction center PufL/M/PsbA/D family. PSII is composed of 1 copy each of membrane proteins PsbA, PsbB, PsbC, PsbD, PsbE, PsbF, PsbH, PsbI, PsbJ, PsbK, PsbL, PsbM, PsbT, PsbX, PsbY, PsbZ, Psb30/Ycf12, at least 3 peripheral proteins of the oxygen-evolving complex and a large number of cofactors. It forms dimeric complexes. It depends on The D1/D2 heterodimer binds P680, chlorophylls that are the primary electron donor of PSII, and subsequent electron acceptors. It shares a non-heme iron and each subunit binds pheophytin, quinone, additional chlorophylls, carotenoids and lipids. There is also a Cl(-1) ion associated with D1 and D2, which is required for oxygen evolution. The PSII complex binds additional chlorophylls, carotenoids and specific lipids. as a cofactor.

Its subcellular location is the plastid. The protein resides in the chloroplast thylakoid membrane. The catalysed reaction is 2 a plastoquinone + 4 hnu + 2 H2O = 2 a plastoquinol + O2. Photosystem II (PSII) is a light-driven water:plastoquinone oxidoreductase that uses light energy to abstract electrons from H(2)O, generating O(2) and a proton gradient subsequently used for ATP formation. It consists of a core antenna complex that captures photons, and an electron transfer chain that converts photonic excitation into a charge separation. The D1/D2 (PsbA/PsbD) reaction center heterodimer binds P680, the primary electron donor of PSII as well as several subsequent electron acceptors. D2 is needed for assembly of a stable PSII complex. In Staurastrum punctulatum (Green alga), this protein is Photosystem II D2 protein.